We begin with the raw amino-acid sequence, 147 residues long: Nucleoside diphosphate kinase (147 aa).

6 residues coordinate ATP: lysine 9, phenylalanine 57, arginine 85, threonine 91, arginine 102, and asparagine 112. Histidine 115 serves as the catalytic Pros-phosphohistidine intermediate.

The protein belongs to the NDK family. Homotetramer. Requires Mg(2+) as cofactor.

The protein localises to the cytoplasm. The catalysed reaction is a 2'-deoxyribonucleoside 5'-diphosphate + ATP = a 2'-deoxyribonucleoside 5'-triphosphate + ADP. The enzyme catalyses a ribonucleoside 5'-diphosphate + ATP = a ribonucleoside 5'-triphosphate + ADP. In terms of biological role, major role in the synthesis of nucleoside triphosphates other than ATP. The ATP gamma phosphate is transferred to the NDP beta phosphate via a ping-pong mechanism, using a phosphorylated active-site intermediate. In Thermosipho melanesiensis (strain DSM 12029 / CIP 104789 / BI429), this protein is Nucleoside diphosphate kinase.